A 325-amino-acid polypeptide reads, in one-letter code: Heat-inducible transcription repressor HrcA (325 aa).

This sequence belongs to the HrcA family.

Functionally, negative regulator of class I heat shock genes (grpE-dnaK-dnaJ and groELS operons). Prevents heat-shock induction of these operons. The chain is Heat-inducible transcription repressor HrcA from Staphylococcus aureus (strain USA300).